The primary structure comprises 29 residues: Dermaseptin-9TR (29 aa).

As to expression, expressed by the skin glands.

The protein localises to the secreted. Functionally, has antimicrobial activity. The protein is Dermaseptin-9TR of Phyllomedusa trinitatis (Trinidad leaf frog).